Reading from the N-terminus, the 606-residue chain is Glutamine--fructose-6-phosphate aminotransferase [isomerizing] (606 aa).

Cysteine 2 (nucleophile; for GATase activity) is an active-site residue. A Glutamine amidotransferase type-2 domain is found at 2–218; the sequence is CGIFGYLGEK…SGELAVLRIG (217 aa). SIS domains follow at residues 278–424 and 448–596; these read FTES…HRQV and LDSS…VDRP. Lysine 601 (for Fru-6P isomerization activity) is an active-site residue.

In terms of assembly, homodimer.

It is found in the cytoplasm. It carries out the reaction D-fructose 6-phosphate + L-glutamine = D-glucosamine 6-phosphate + L-glutamate. Its function is as follows. Catalyzes the first step in hexosamine metabolism, converting fructose-6P into glucosamine-6P using glutamine as a nitrogen source. This is Glutamine--fructose-6-phosphate aminotransferase [isomerizing] from Chlamydia trachomatis serovar D (strain ATCC VR-885 / DSM 19411 / UW-3/Cx).